Reading from the N-terminus, the 296-residue chain is MNSPFHNIGIVTRPNTPDIQDTAHTLITFLKQHGFTVYLDEVGIKEGCIYTQDTVGCHIVNKTELGQYCDLVAVLGGDGTFLSVAREIALRAVPIIGINQGHLGFLTQIPREYMTDKLLPVLEGKYLAEERILIEAALIREGKTAERAIALNDAVLSRGGAGQMIEFEVFVNREFVYTQRSDGLIVSTPTGSTAYSLAAGGPIMQAGLHAFTLVPICPQSMTNRPIAIPDTSEIEILVTQGGDARVHFDGQTHIDVQNLDRITIRRYRNPLRILHPTDYQYFKTLRQKLHWGEQLV.

The active-site Proton acceptor is the D78. Residues 78-79 (DG), 152-153 (ND), R180, D182, and Q251 each bind NAD(+).

Belongs to the NAD kinase family. A divalent metal cation serves as cofactor.

Its subcellular location is the cytoplasm. The catalysed reaction is NAD(+) + ATP = ADP + NADP(+) + H(+). Its function is as follows. Involved in the regulation of the intracellular balance of NAD and NADP, and is a key enzyme in the biosynthesis of NADP. Catalyzes specifically the phosphorylation on 2'-hydroxyl of the adenosine moiety of NAD to yield NADP. The polypeptide is NAD kinase (Neisseria meningitidis serogroup C (strain 053442)).